We begin with the raw amino-acid sequence, 170 residues long: Large ribosomal subunit protein uL5 (170 aa).

It belongs to the universal ribosomal protein uL5 family. As to quaternary structure, part of the 50S ribosomal subunit; contacts the 5S rRNA and probably tRNA. Forms a bridge to the 30S subunit in the 70S ribosome.

This is one of the proteins that bind and probably mediate the attachment of the 5S RNA into the large ribosomal subunit, where it forms part of the central protuberance. In the 70S ribosome it contacts protein S13 of the 30S subunit (bridge B1b), connecting the 2 subunits; this bridge is implicated in subunit movement. May contact the P site tRNA; the 5S rRNA and some of its associated proteins might help stabilize positioning of ribosome-bound tRNAs. The chain is Large ribosomal subunit protein uL5 from Thermoplasma acidophilum (strain ATCC 25905 / DSM 1728 / JCM 9062 / NBRC 15155 / AMRC-C165).